The sequence spans 793 residues: Probable serine/threonine-protein kinase fnkA (793 aa).

One can recognise a Protein kinase domain in the interval 11–358; sequence WEILSQLGTG…IINLISHNFI (348 aa). ATP contacts are provided by residues 17 to 25 and lysine 46; that span reads LGTGAFGRV. Aspartate 138 functions as the Proton acceptor in the catalytic mechanism. 5 FNIP repeats span residues 403–444, 470–514, 515–557, 558–601, and 691–733; these read FNQT…FGAR, YNQP…ILGD, YDQK…LGYR, FNKA…LGYC, and FIRP…LGSR.

Belongs to the protein kinase superfamily. STE Ser/Thr protein kinase family. Requires Mg(2+) as cofactor.

The catalysed reaction is L-seryl-[protein] + ATP = O-phospho-L-seryl-[protein] + ADP + H(+). It catalyses the reaction L-threonyl-[protein] + ATP = O-phospho-L-threonyl-[protein] + ADP + H(+). This chain is Probable serine/threonine-protein kinase fnkA, found in Dictyostelium discoideum (Social amoeba).